Consider the following 248-residue polypeptide: Probable 2-oxo-3-(5-oxofuran-2-ylidene)propanoate lactonase (248 aa).

Residues Cys-123, Asp-180, and His-212 contribute to the active site.

Belongs to the dienelactone hydrolase family.

The catalysed reaction is 2-oxo-3-(5-oxofuran-2-ylidene)propanoate + H2O = 3-maleylpyruvate + H(+). In terms of biological role, involved in the 5-nitroanthranilic acid (5NAA) degradation. Catalyzes the hydrolysis of the lactone to produce maleylpyruvate biodegradation of 5-nitroanthranilate. The sequence is that of Probable 2-oxo-3-(5-oxofuran-2-ylidene)propanoate lactonase (naaC) from Bradyrhizobium sp.